The chain runs to 370 residues: Phospho-2-dehydro-3-deoxyheptonate aldolase, tyrosine-inhibited (370 aa).

Residue serine 2 is modified to N-acetylserine.

Belongs to the class-I DAHP synthase family.

It carries out the reaction D-erythrose 4-phosphate + phosphoenolpyruvate + H2O = 7-phospho-2-dehydro-3-deoxy-D-arabino-heptonate + phosphate. The protein operates within metabolic intermediate biosynthesis; chorismate biosynthesis; chorismate from D-erythrose 4-phosphate and phosphoenolpyruvate: step 1/7. Its activity is regulated as follows. Inhibited by tyrosine. In terms of biological role, stereospecific condensation of phosphoenolpyruvate (PEP) and D-erythrose-4-phosphate (E4P) giving rise to 3-deoxy-D-arabino-heptulosonate-7-phosphate (DAHP). This chain is Phospho-2-dehydro-3-deoxyheptonate aldolase, tyrosine-inhibited (ARO4), found in Saccharomyces cerevisiae (strain ATCC 204508 / S288c) (Baker's yeast).